We begin with the raw amino-acid sequence, 151 residues long: uncharacterized protein (151 aa).

[4Fe-4S] cluster-binding residues include Cys-24, Cys-27, Cys-92, and Cys-129.

Belongs to the complex I 20 kDa subunit family. It depends on [4Fe-4S] cluster as a cofactor.

This is an uncharacterized protein from Methanocaldococcus jannaschii (strain ATCC 43067 / DSM 2661 / JAL-1 / JCM 10045 / NBRC 100440) (Methanococcus jannaschii).